Here is a 191-residue protein sequence, read N- to C-terminus: MKQLFLIIGAPGSGKTTDAELISKNNSETIAHFSTGDLLRAESAKKTERGLLIEKFTSQGELVPLEIVVETILSAIKSSSKRIILIDGYPRSVEQMQALDKELNAQNEVILKSVIEVEVSENTAKERVLGRSRGADDNEKVFHNRMRVFLDPLAEIQNFYKAKHLHKVINGERSIEEIVHEMQEYILSFGN.

An ATP-binding site is contributed by 12–17 (GSGKTT). The segment at 34 to 63 (STGDLLRAESAKKTERGLLIEKFTSQGELV) is NMP. Residues threonine 35, arginine 40, 61–63 (ELV), 88–91 (GYPR), and glutamine 95 contribute to the AMP site. The segment at 130 to 136 (GRSRGAD) is LID. Arginine 131 provides a ligand contact to ATP. Residues arginine 133 and arginine 145 each contribute to the AMP site. Arginine 173 contributes to the ATP binding site.

Belongs to the adenylate kinase family. As to quaternary structure, monomer.

It is found in the cytoplasm. The catalysed reaction is AMP + ATP = 2 ADP. It functions in the pathway purine metabolism; AMP biosynthesis via salvage pathway; AMP from ADP: step 1/1. Catalyzes the reversible transfer of the terminal phosphate group between ATP and AMP. Plays an important role in cellular energy homeostasis and in adenine nucleotide metabolism. The sequence is that of Adenylate kinase from Helicobacter pylori (strain HPAG1).